A 185-amino-acid polypeptide reads, in one-letter code: MTTIVSVRRNNKVVIAGDGQVSLGNTVMKGNARKVRRLYNNKVLAGFAGGTADAFTLFERFESKLQMHQGHLTKAAVELAKDWRSDRALRRLEAILAVADETASLIITGNGDVLQPEHDLIAIGSGGNYAQAAAIALLENTELDARTIAEKALNIAGDICVFTNHHHTIEELEIPQAMLPQGASA.

T2 is an active-site residue. Na(+) contacts are provided by G157, C160, and T163.

The protein belongs to the peptidase T1B family. HslV subfamily. In terms of assembly, a double ring-shaped homohexamer of HslV is capped on each side by a ring-shaped HslU homohexamer. The assembly of the HslU/HslV complex is dependent on binding of ATP.

It is found in the cytoplasm. It carries out the reaction ATP-dependent cleavage of peptide bonds with broad specificity.. With respect to regulation, allosterically activated by HslU binding. Functionally, protease subunit of a proteasome-like degradation complex believed to be a general protein degrading machinery. In Vibrio cholerae serotype O1 (strain ATCC 39315 / El Tor Inaba N16961), this protein is ATP-dependent protease subunit HslV.